The primary structure comprises 942 residues: Isoleucine--tRNA ligase (942 aa).

The 'HIGH' region motif lies at 58–68; it reads PYANGDIHIGH. L-isoleucyl-5'-AMP is bound at residue E566. Positions 607–611 match the 'KMSKS' region motif; that stretch reads KMSKS. K610 lines the ATP pocket. Zn(2+)-binding residues include C905, C908, C925, and C928.

It belongs to the class-I aminoacyl-tRNA synthetase family. IleS type 1 subfamily. In terms of assembly, monomer. Zn(2+) serves as cofactor.

It is found in the cytoplasm. The catalysed reaction is tRNA(Ile) + L-isoleucine + ATP = L-isoleucyl-tRNA(Ile) + AMP + diphosphate. Its function is as follows. Catalyzes the attachment of isoleucine to tRNA(Ile). As IleRS can inadvertently accommodate and process structurally similar amino acids such as valine, to avoid such errors it has two additional distinct tRNA(Ile)-dependent editing activities. One activity is designated as 'pretransfer' editing and involves the hydrolysis of activated Val-AMP. The other activity is designated 'posttransfer' editing and involves deacylation of mischarged Val-tRNA(Ile). The polypeptide is Isoleucine--tRNA ligase (Vibrio campbellii (strain ATCC BAA-1116)).